A 177-amino-acid polypeptide reads, in one-letter code: Inorganic pyrophosphatase (177 aa).

3 residues coordinate substrate: lysine 31, arginine 45, and tyrosine 57. Mg(2+) is bound by residues aspartate 67, aspartate 72, and aspartate 104. Tyrosine 142 lines the substrate pocket.

This sequence belongs to the PPase family. In terms of assembly, homohexamer. Mg(2+) serves as cofactor.

It is found in the cytoplasm. The catalysed reaction is diphosphate + H2O = 2 phosphate + H(+). In terms of biological role, catalyzes the hydrolysis of inorganic pyrophosphate (PPi) forming two phosphate ions. In Neisseria meningitidis serogroup B (strain ATCC BAA-335 / MC58), this protein is Inorganic pyrophosphatase.